The chain runs to 669 residues: DNA ligase (669 aa).

Residues 34 to 38 (DAEYD), 83 to 84 (SL), and Glu-113 contribute to the NAD(+) site. Catalysis depends on Lys-115, which acts as the N6-AMP-lysine intermediate. NAD(+) contacts are provided by Arg-136, Glu-170, Lys-286, and Lys-310. Cys-404, Cys-407, Cys-422, and Cys-427 together coordinate Zn(2+). Residues 591–669 (IADSPFAGKT…EEALVKAISH (79 aa)) form the BRCT domain.

This sequence belongs to the NAD-dependent DNA ligase family. LigA subfamily. It depends on Mg(2+) as a cofactor. Mn(2+) is required as a cofactor.

The catalysed reaction is NAD(+) + (deoxyribonucleotide)n-3'-hydroxyl + 5'-phospho-(deoxyribonucleotide)m = (deoxyribonucleotide)n+m + AMP + beta-nicotinamide D-nucleotide.. Functionally, DNA ligase that catalyzes the formation of phosphodiester linkages between 5'-phosphoryl and 3'-hydroxyl groups in double-stranded DNA using NAD as a coenzyme and as the energy source for the reaction. It is essential for DNA replication and repair of damaged DNA. The protein is DNA ligase of Halalkalibacterium halodurans (strain ATCC BAA-125 / DSM 18197 / FERM 7344 / JCM 9153 / C-125) (Bacillus halodurans).